The sequence spans 431 residues: Protein EARLY STARVATION 1, chloroplastic (431 aa).

Residues 1–19 constitute a chloroplast transit peptide; it reads MAACSRGLVARPFDLTARG. Disordered stretches follow at residues 65-126 and 403-431; these read GNKP…DTGI and GVYP…SPLE. Residues 415 to 431 show a composition bias toward pro residues; that stretch reads PAPPSDDPPGMPPSPLE.

This sequence belongs to the ESV1 family.

Its subcellular location is the plastid. The protein resides in the chloroplast stroma. Binds preferentially to highly ordered alpha-glucans, such as starch and crystalline maltodextrins. Involved in the organization of the starch granule matrix, thus influencing starch turnover by modulating the accessibility of starch polymers to modifying and degrading enzymes. Required for the control of starch degradation in leaves and starch distribution in nonphotosynthetic parts. Promotes gravitropic responses, negative in shoots but positive in roots, by facilitating starch granules (statoliths) formation in hypocotyls and roots columella. Facilitates tight packing of starch granules in grains. The polypeptide is Protein EARLY STARVATION 1, chloroplastic (Oryza sativa subsp. japonica (Rice)).